We begin with the raw amino-acid sequence, 312 residues long: Tetraspanin-17 (312 aa).

The next 4 membrane-spanning stretches (helical) occupy residues 17-37, 64-84, 89-109, and 274-294; these read IFSIYYWLSALGHVFLGLWML, VSLVCGCAQLLVGFLGLCGAV, FLLLAFVMFLIGTFLADVAMG, and IWIFVGFGFGSALTMMLGICL.

This sequence belongs to the tetraspanin (TM4SF) family. As to expression, expressed in dopaminergic neurons, head muscles, vulva and spermatheca.

Its subcellular location is the cell membrane. It localises to the cell projection. It is found in the dendrite. The protein resides in the axon. In terms of biological role, protects dopaminergic neurons against oxidative stress-induced neurodegeneration. May act partly via dopamine receptor dop-2 to negatively regulate dopamine reuptake transporter dat-1 activity. Also plays a role in modulating behaviors linked to dopamine signaling. Confers protection against oxidative stress in the whole body. The chain is Tetraspanin-17 from Caenorhabditis elegans.